Here is a 118-residue protein sequence, read N- to C-terminus: UPF0102 protein NE0719 (118 aa).

It belongs to the UPF0102 family.

The polypeptide is UPF0102 protein NE0719 (Nitrosomonas europaea (strain ATCC 19718 / CIP 103999 / KCTC 2705 / NBRC 14298)).